Consider the following 437-residue polypeptide: Photosystem II stability/assembly factor HCF136, chloroplastic (437 aa).

Belongs to the Ycf48 family.

The protein localises to the plastid. Its subcellular location is the chloroplast thylakoid membrane. Functionally, essential for photosystem II (PSII) biogenesis; required for assembly of an early intermediate in PSII assembly that includes D2 (psbD) and cytochrome b559. The sequence is that of Photosystem II stability/assembly factor HCF136, chloroplastic from Cyanidioschyzon merolae (strain NIES-3377 / 10D) (Unicellular red alga).